The sequence spans 190 residues: Probable gluconokinase (190 aa).

7 to 14 (GVSGSGKT) lines the ATP pocket.

This sequence belongs to the gluconokinase GntK/GntV family.

It catalyses the reaction D-gluconate + ATP = 6-phospho-D-gluconate + ADP + H(+). It functions in the pathway carbohydrate acid metabolism; D-gluconate degradation. The chain is Probable gluconokinase (idnk) from Xenopus tropicalis (Western clawed frog).